The sequence spans 316 residues: Sideroflexin-4 (316 aa).

A run of 5 helical transmembrane segments spans residues 83–103 (QVFL…HKGI), 141–161 (LLIL…QIIL), 174–194 (ICRS…NILV), 230–250 (ISRA…MALL), and 263–283 (IAPI…PVSF).

Belongs to the sideroflexin family.

It is found in the mitochondrion inner membrane. Its function is as follows. Mitochondrial amino-acid transporter. Does not act as a serine transporter: not able to mediate transport of serine into mitochondria. The sequence is that of Sideroflexin-4 from Danio rerio (Zebrafish).